Reading from the N-terminus, the 158-residue chain is Flagellar assembly factor FliW (158 aa).

This sequence belongs to the FliW family. Interacts with translational regulator CsrA and flagellin(s).

It localises to the cytoplasm. Its function is as follows. Acts as an anti-CsrA protein, binds CsrA and prevents it from repressing translation of its target genes, one of which is flagellin. Binds to flagellin and participates in the assembly of the flagellum. In Syntrophus aciditrophicus (strain SB), this protein is Flagellar assembly factor FliW.